The following is a 342-amino-acid chain: Arrestin domain-containing protein 5 (342 aa).

This sequence belongs to the arrestin family. In terms of tissue distribution, testis-enriched.

It localises to the membrane. Its function is as follows. Plays an essential role in spermatogenesis. May be involved in the anchoring of the sperm head to the tail during spermatogenesis by affecting SEC22A-mediated SUN5 and NDC1 transport and localization. The protein is Arrestin domain-containing protein 5 (ARRDC5) of Homo sapiens (Human).